The primary structure comprises 66 residues: Phylloseptin-B1 (66 aa).

Residues 1 to 22 (MAFLKKSLFLVLFLGLVSLSIC) form the signal peptide. Positions 23–46 (EEEKRETEEKEYDQGEDDKSEEKR) are excised as a propeptide. Leu-65 bears the Leucine amide mark.

The protein belongs to the frog skin active peptide (FSAP) family. Phylloseptin subfamily. Expressed by the skin glands.

The protein localises to the secreted. It localises to the target cell membrane. Antimicrobial peptide with activity against only a few strains of Gram-positive bacteria (S.aureus and B.megaterium). Acts in a synergistic effect in combination with Plasticin-B1 at doses that are not active alone. In Phyllomedusa bicolor (Two-colored leaf frog), this protein is Phylloseptin-B1.